The sequence spans 738 residues: MPMTRDFFATAPKGLEPLLVRELDGLGAESIKETRAGVEFRGTLETAYRVCLWSRLANRILMSLDRFAAATPEALYDGVQRTDWGRHFGPGATLAVDFSSRRSAITHTLFGAQKVKDAIADQFLEHCGRRPSVRLERPDIRINVHLDADQAVIGLDLSGDSLHRRGYRTEAGPAPLKENLAAAVLIRAGWPDIAARGGSLIDPMCGSATLLIEGALLAADIAPGSFREYFGFLAWKGHDLELWRKLLTEARERAEAGLARLPPILGYDLDRRAIHLALDNIDRAGLRGRIHVERKVAADVRPKGRPGLVVVNPPYGERLGDVESLIPVYREFGETLQRHFRGWNAALLTGNFELAFQIGIRAGRYHTLYNGALECRLFLFDIAPERFFTPRSGVPETEGQKKLRQIVEKARRGAIPAEQSEMFANRLRKNLRNLGTWARRNGVSCYRLYDADLPEFAVAVDIYQGEKLWVHVQEYEAPASVDPAKAQSRLAGAVAMIPEVLEVPREQIFLKVRRRQKGDAQYVKQGQTAHFHVVEEGGWRFWVNFEDYLDTGLFLDHRITRGLIQQVARDRHFLNLFAYTGTATVYAAGGGAASTTTVDMSHTYLDWAGRNLALNGFGERDHLRIQADCLDWLEQAVDRRRRYGLIFLDPPTFSNSKRMTGSFDIQRDQGPLLKKVVSLLEPGGMLIFSTNRRRFRLDETALAGCAVEDVSRVTLPKDFERNPRIHACWRILAPDRQR.

The region spanning Thr-46–Leu-157 is the THUMP domain.

Belongs to the methyltransferase superfamily. RlmKL family.

The protein localises to the cytoplasm. It catalyses the reaction guanosine(2445) in 23S rRNA + S-adenosyl-L-methionine = N(2)-methylguanosine(2445) in 23S rRNA + S-adenosyl-L-homocysteine + H(+). The catalysed reaction is guanosine(2069) in 23S rRNA + S-adenosyl-L-methionine = N(2)-methylguanosine(2069) in 23S rRNA + S-adenosyl-L-homocysteine + H(+). Specifically methylates the guanine in position 2445 (m2G2445) and the guanine in position 2069 (m7G2069) of 23S rRNA. The chain is Ribosomal RNA large subunit methyltransferase K/L from Methylococcus capsulatus (strain ATCC 33009 / NCIMB 11132 / Bath).